The following is an 83-amino-acid chain: Protein kreg-1 (83 aa).

The tract at residues 62-83 is disordered; it reads GHHHHHHGHHFGHHHHHHHGHH.

In terms of tissue distribution, weakly expressed in the intestine, but expression is up-regulated in response to Cu(2+).

Its function is as follows. Plays a role in the stress response to heavy metals such as copper, probably in a fos-1/kgb-1-dependent manner. The sequence is that of Protein kreg-1 from Caenorhabditis elegans.